We begin with the raw amino-acid sequence, 2359 residues long: Neuron navigator 3 (2359 aa).

Positions 77–184 constitute a Calponin-homology (CH) domain; the sequence is IEDSKIYTDW…LFFSLSRYKQ (108 aa). 4 stretches are compositionally biased toward polar residues: residues 204 to 226, 233 to 243, 257 to 279, and 300 to 317; these read THTAPQSEASQAKTQQDMQSSLT, SKHSGIATSQK, ASSSNKAQGASNLNRRSQSFNSI, and QPSSGINGNTQPPSTSGQ. 2 disordered regions span residues 204–623 and 641–660; these read THTA…QQQH and ENEGTSLPPADSCTSPTKMD. The segment covering 318–329 has biased composition (low complexity); sequence PPASAIPSPSAS. The span at 335–352 shows a compositional bias: polar residues; that stretch reads KSMNVKHSATSTMLTVKQ. Composition is skewed to low complexity over residues 353–363 and 427–439; these read PSPATSPTPSS and NSGLNSGGSTNSS. The span at 465–491 shows a compositional bias: basic and acidic residues; sequence PKEKEEKTRDKNKACAEKSGKEEKDQV. Over residues 522-536 the composition is skewed to low complexity; that stretch reads IPSSSGIPKPGSKVP. The segment covering 592-623 has biased composition (polar residues); that stretch reads ASPSSSCVMQVTHSSGQSPGNGAVQLPQQQQH. Residues 680–708 adopt a coiled-coil conformation; it reads EARRMRTVKNIADLRQNLEETMSSLRGTQ. Disordered stretches follow at residues 878–1315, 1413–1472, 1653–1758, and 1829–1855; these read ADSW…SPLF, LSES…AMSS, GALN…KPSQ, and ETGNTAKPARPPSDSSSTASSSSSRQS. 2 stretches are compositionally biased toward low complexity: residues 883–896 and 904–916; these read DSSSVSSGLSDTLD and NTTSSISSYSNIT. Over residues 917 to 926 the composition is skewed to polar residues; sequence VPSRKNTQLK. The segment covering 943 to 960 has biased composition (basic and acidic residues); that stretch reads EELKKAEGDCDSHGDGAA. Composition is skewed to polar residues over residues 978–989 and 997–1013; these read QKASLSVSQTGS and QGGTPATARQKTSTSAL. Residues 1017–1029 show a composition bias toward basic and acidic residues; that stretch reads GKTDDAKASEKGK. 2 stretches are compositionally biased toward low complexity: residues 1077-1095 and 1160-1173; these read GASTMITSSGATITSGSAT and SSTSSIDSNVSSKS. Polar residues predominate over residues 1190 to 1199; sequence GRSSPVTVNQ. 3 stretches are compositionally biased toward low complexity: residues 1209–1229, 1256–1266, and 1274–1285; these read VSDSESVSLSGSPKSSPTSAS, GAKAGGKSASA, and SSSVVLSPSTSL. A compositionally biased stretch (gly residues) spans 1299–1308; it reads GSMGSAGGLS. Residues 1439-1448 show a composition bias toward basic and acidic residues; sequence NQEEGKEWLR. The span at 1449–1461 shows a compositional bias: polar residues; the sequence is SHSTGGLQDTGNQ. Residues Ser1462 and Ser1466 each carry the phosphoserine modification. Residues 1462-1472 show a composition bias toward low complexity; the sequence is SPLVSPSAMSS. A coiled-coil region spans residues 1565 to 1656; it reads AEEKAHSEQI…AQAAIQGALN (92 aa). 2 stretches are compositionally biased toward low complexity: residues 1675–1692 and 1749–1758; these read SVSSINSATSHSSIGSGN and SGSSSMKPSQ. The stretch at 1768–1835 forms a coiled coil; that stretch reads EAEAEIILQL…LKAETGNTAK (68 aa). The segment covering 1841–1855 has biased composition (low complexity); it reads SDSSSTASSSSSRQS.

It belongs to the Nav/unc-53 family. In terms of tissue distribution, present in neurons from central and peripheral nervous systems (at protein level). Highly expressed in brain cortex, midbrain, cerebellum and hippocampus.

The protein localises to the nucleus outer membrane. In terms of biological role, plays a role in cell migration. May be involved in neuron regeneration. May regulate IL2 production by T-cells. The chain is Neuron navigator 3 (Nav3) from Mus musculus (Mouse).